A 250-amino-acid polypeptide reads, in one-letter code: Agamous-like MADS-box protein AGL8 homolog (250 aa).

The MADS-box domain occupies 3–57; that stretch reads RGRVQLKRIENKINRQVTFSKRRSGLLKKAHEISVLCDAEVGLIVFSTKGKLFEY. The K-box domain maps to 88–178; the sequence is PGSWTLEHAK…SKKVKEREKE (91 aa).

As to expression, abundant in vegetative organs.

The protein localises to the nucleus. Probable transcription factor. The polypeptide is Agamous-like MADS-box protein AGL8 homolog (Solanum tuberosum (Potato)).